A 91-amino-acid polypeptide reads, in one-letter code: ATP synthase subunit c (91 aa).

2 consecutive transmembrane segments (helical) span residues 4–24 and 53–73; these read FTMC…GTGI and IGLA…LIIL.

This sequence belongs to the ATPase C chain family. In terms of assembly, F-type ATPases have 2 components, F(1) - the catalytic core - and F(0) - the membrane proton channel. F(1) has five subunits: alpha(3), beta(3), gamma(1), delta(1), epsilon(1). F(0) has three main subunits: a(1), b(2) and c(10-14). The alpha and beta chains form an alternating ring which encloses part of the gamma chain. F(1) is attached to F(0) by a central stalk formed by the gamma and epsilon chains, while a peripheral stalk is formed by the delta and b chains.

Its subcellular location is the cell inner membrane. In terms of biological role, f(1)F(0) ATP synthase produces ATP from ADP in the presence of a proton or sodium gradient. F-type ATPases consist of two structural domains, F(1) containing the extramembraneous catalytic core and F(0) containing the membrane proton channel, linked together by a central stalk and a peripheral stalk. During catalysis, ATP synthesis in the catalytic domain of F(1) is coupled via a rotary mechanism of the central stalk subunits to proton translocation. Key component of the F(0) channel; it plays a direct role in translocation across the membrane. A homomeric c-ring of between 10-14 subunits forms the central stalk rotor element with the F(1) delta and epsilon subunits. This Trichlorobacter lovleyi (strain ATCC BAA-1151 / DSM 17278 / SZ) (Geobacter lovleyi) protein is ATP synthase subunit c.